The following is a 164-amino-acid chain: 17.8 kDa class II heat shock protein (164 aa).

The 117-residue stretch at 48 to 164 (DARAMAATPA…KPKTIEVKVA (117 aa)) folds into the sHSP domain.

It belongs to the small heat shock protein (HSP20) family.

Its subcellular location is the cytoplasm. The polypeptide is 17.8 kDa class II heat shock protein (Zea mays (Maize)).